Here is a 368-residue protein sequence, read N- to C-terminus: PPE family immunomodulator PPE68 (368 aa).

2 disordered regions span residues 255-280 and 312-368; these read LGTS…LLRA and AAAG…EDDW. Residues 312 to 327 show a composition bias toward low complexity; it reads AAAGSSATGGAAPVGA. Acidic residues predominate over residues 354–368; sequence REEDDEDDWDEEDDW.

It belongs to the mycobacterial PPE family. In terms of assembly, homodimer. Interacts with PE35. PE35/PPE68 complex interacts with human TLR2.

Its subcellular location is the secreted. It is found in the cell wall. It localises to the cell membrane. The protein localises to the cell surface. Functionally, plays a major role in RD1-associated pathogenesis, and may contribute to the establishment and maintenance of M.tuberculosis infection. Together with PE35, stimulates the secretion of IL-10 and MCP-1 from human macrophages, via the interaction with human Toll-like receptor 2 (TLR2). The sequence is that of PPE family immunomodulator PPE68 (PPE68) from Mycobacterium tuberculosis (strain CDC 1551 / Oshkosh).